The sequence spans 379 residues: Fimbrium subunit Fim1C (379 aa).

The signal sequence occupies residues 1 to 17; it reads MEVKSLLMVMATLTIAG. The N-palmitoyl cysteine moiety is linked to residue C18. C18 carries the S-diacylglycerol cysteine lipid modification. Residues 18 to 45 constitute a propeptide that is removed on maturation; that stretch reads CSQNEMTEMNPDTNRTIGLDVYTEVQTR.

This sequence belongs to the bacteroidetes fimbrillin superfamily. Mfa-like family. May be part of the fimbrial tip.

The protein resides in the fimbrium. The protein localises to the cell outer membrane. Its function is as follows. Probably a component of the fimbrium tip. Fimbriae are filamentous appendages on the cell surface that mediate cell adhesion and biofilm formation. This chain is Fimbrium subunit Fim1C (fim1C), found in Phocaeicola vulgatus (strain ATCC 8482 / DSM 1447 / JCM 5826 / CCUG 4940 / NBRC 14291 / NCTC 11154) (Bacteroides vulgatus).